A 411-amino-acid chain; its full sequence is Protein PHLOEM PROTEIN 2-LIKE A5 (411 aa).

The region spanning 20-157 (TGPQVFINFR…KWTEALFSVC (138 aa)) is the TIR domain. Residue Glu-94 is part of the active site.

It catalyses the reaction NAD(+) + H2O = ADP-D-ribose + nicotinamide + H(+). The sequence is that of Protein PHLOEM PROTEIN 2-LIKE A5 (PP2A5) from Arabidopsis thaliana (Mouse-ear cress).